A 263-amino-acid polypeptide reads, in one-letter code: MNIYRKKNIIKKCFMEFFGTGLVMFFGIGCLAASKLTNANFTQFEISCIWGFGVSIAIYFSSSISGAHLNPAVTIFFWLSSKLNKRKVLPYIISQTLGSFFFTMLTYYLYNNLLISFERNNNVVRGTQESLNLASIFCVYPNYNNSFIYDFIIEIFSTALFILIVLEFNNRNSNYFLYNRSVAPILTGFLVCMINLVINPLNNISLNPARDLGPKILLSLTGWGLFSFTGGNDNILYCFIPIMGPILGANLGGWIHKTLINNS.

Over 1 to 7 the chain is Cytoplasmic; that stretch reads MNIYRKK. The chain crosses the membrane as a helical span at residues 8-36; it reads NIIKKCFMEFFGTGLVMFFGIGCLAASKL. At 37 to 41 the chain is on the extracellular side; the sequence is TNANF. A helical membrane pass occupies residues 42-62; it reads TQFEISCIWGFGVSIAIYFSS. The Cytoplasmic portion of the chain corresponds to 63-65; it reads SIS. An intramembrane segment occupies 66–69; that stretch reads GAHL. The NPA 1 signature appears at 70–72; the sequence is NPA. An intramembrane region (helical) is located at residues 70–80; sequence NPAVTIFFWLS. Topologically, residues 81 to 86 are cytoplasmic; sequence SKLNKR. The chain crosses the membrane as a helical span at residues 87 to 110; sequence KVLPYIISQTLGSFFFTMLTYYLY. Residues 111–145 are Extracellular-facing; sequence NNLLISFERNNNVVRGTQESLNLASIFCVYPNYNN. The chain crosses the membrane as a helical span at residues 146 to 171; sequence SFIYDFIIEIFSTALFILIVLEFNNR. Residues 172–181 are Cytoplasmic-facing; sequence NSNYFLYNRS. The chain crosses the membrane as a helical span at residues 182 to 198; the sequence is VAPILTGFLVCMINLVI. The Extracellular portion of the chain corresponds to 199-202; the sequence is NPLN. The stretch at 203 to 206 is an intramembrane region; it reads NISL. The NPA 2 signature appears at 207–209; that stretch reads NPA. The helical intramembrane region spans 207-220; the sequence is NPARDLGPKILLSL. Over 221–236 the chain is Extracellular; sequence TGWGLFSFTGGNDNIL. The chain crosses the membrane as a helical span at residues 237 to 259; sequence YCFIPIMGPILGANLGGWIHKTL. The Cytoplasmic segment spans residues 260–263; the sequence is INNS.

Belongs to the MIP/aquaporin (TC 1.A.8) family.

The protein localises to the cell membrane. The catalysed reaction is glycerol(in) = glycerol(out). In terms of biological role, mediates glycerol diffusion across the cytoplasmic membrane via a pore-type mechanism. This is Glycerol uptake facilitator protein (glpF) from Buchnera aphidicola subsp. Acyrthosiphon pisum (strain APS) (Acyrthosiphon pisum symbiotic bacterium).